A 264-amino-acid chain; its full sequence is Thymidylate synthase (264 aa).

DUMP contacts are provided by residues R21 and 126-127 (RR). C146 acts as the Nucleophile in catalysis. DUMP contacts are provided by residues 166 to 169 (RSAD), N177, and 207 to 209 (HLY). Position 169 (D169) interacts with (6R)-5,10-methylene-5,6,7,8-tetrahydrofolate. A263 contacts (6R)-5,10-methylene-5,6,7,8-tetrahydrofolate.

It belongs to the thymidylate synthase family. Bacterial-type ThyA subfamily. In terms of assembly, homodimer.

Its subcellular location is the cytoplasm. The enzyme catalyses dUMP + (6R)-5,10-methylene-5,6,7,8-tetrahydrofolate = 7,8-dihydrofolate + dTMP. The protein operates within pyrimidine metabolism; dTTP biosynthesis. Catalyzes the reductive methylation of 2'-deoxyuridine-5'-monophosphate (dUMP) to 2'-deoxythymidine-5'-monophosphate (dTMP) while utilizing 5,10-methylenetetrahydrofolate (mTHF) as the methyl donor and reductant in the reaction, yielding dihydrofolate (DHF) as a by-product. This enzymatic reaction provides an intracellular de novo source of dTMP, an essential precursor for DNA biosynthesis. The protein is Thymidylate synthase of Rhodopseudomonas palustris (strain ATCC BAA-98 / CGA009).